Consider the following 74-residue polypeptide: Molt-inhibiting hormone (74 aa).

Pyrrolidone carboxylic acid is present on Gln1. Cystine bridges form between Cys7/Cys43, Cys23/Cys39, and Cys26/Cys52. At Val72 the chain carries Valine amide.

It is found in the secreted. Inhibits Y-organs where molting hormone (ecdysteroid) is secreted. A molting cycle is initiated when MIH secretion diminishes or stops. The polypeptide is Molt-inhibiting hormone (Procambarus bouvieri (Mexican crayfish)).